The chain runs to 268 residues: Putative hydro-lyase PSPTO_5379 (268 aa).

Belongs to the D-glutamate cyclase family.

In Pseudomonas syringae pv. tomato (strain ATCC BAA-871 / DC3000), this protein is Putative hydro-lyase PSPTO_5379.